The following is a 938-amino-acid chain: AP-2 complex subunit alpha-2 (938 aa).

A 1,2-diacyl-sn-glycero-3-phospho-(1D-myo-inositol-3,4,5-trisphosphate)-binding positions include 11-12, Lys-43, Tyr-53, and 57-61; these read RG and KYVCK. The disordered stretch occupies residues 615–681; it reads LKKKKGPSTV…TGPPPSSGGG (67 aa). Residues 646–667 show a composition bias toward low complexity; that stretch reads PASTSAASTPSPSADLLGLGAV. The segment covering 668 to 677 has biased composition (pro residues); it reads PPAPTGPPPS.

It belongs to the adaptor complexes large subunit family. In terms of assembly, adaptor protein complex 2 (AP-2) is a heterotetramer composed of two large adaptins (alpha-type subunit AP2A1 or AP2A2 and beta-type subunit AP2B1), a medium adaptin (mu-type subunit AP2M1) and a small adaptin (sigma-type subunit AP2S1). Interacts with clathrin. Binds EPN1, EPS15, AMPH, SNAP91 and BIN1. Interacts with HIP1. Interacts with DGKD. Interacts with DENND1A, DENND1B and DENND1C. Interacts with FCHO1 and DAB2. Interacts with ATAT1; this interaction is required for efficient alpha-tubulin acetylation by ATAT1. Interacts with KIAA1107. Together with AP2B1 and AP2M1, it interacts with ADAM10; this interaction facilitates ADAM10 endocytosis from the plasma membrane during long-term potentiation in hippocampal neurons. Interacts with CLN3 (via dileucine motif). Interacts with ABCB11; this interaction regulates cell membrane expression of ABCB11 through its internalization in a clathrin-dependent manner and its subsequent degradation. Interacts with Cacfd1. Interacts with DNAJC6. Widely expressed.

Its subcellular location is the cell membrane. The protein resides in the membrane. The protein localises to the coated pit. Its function is as follows. Component of the adaptor protein complex 2 (AP-2). Adaptor protein complexes function in protein transport via transport vesicles in different membrane traffic pathways. Adaptor protein complexes are vesicle coat components and appear to be involved in cargo selection and vesicle formation. AP-2 is involved in clathrin-dependent endocytosis in which cargo proteins are incorporated into vesicles surrounded by clathrin (clathrin-coated vesicles, CCVs) which are destined for fusion with the early endosome. The clathrin lattice serves as a mechanical scaffold but is itself unable to bind directly to membrane components. Clathrin-associated adaptor protein (AP) complexes which can bind directly to both the clathrin lattice and to the lipid and protein components of membranes are considered to be the major clathrin adaptors contributing the CCV formation. AP-2 also serves as a cargo receptor to selectively sort the membrane proteins involved in receptor-mediated endocytosis. AP-2 seems to play a role in the recycling of synaptic vesicle membranes from the presynaptic surface. AP-2 recognizes Y-X-X-[FILMV] (Y-X-X-Phi) and [ED]-X-X-X-L-[LI] endocytosis signal motifs within the cytosolic tails of transmembrane cargo molecules. AP-2 may also play a role in maintaining normal post-endocytic trafficking through the ARF6-regulated, non-clathrin pathway. During long-term potentiation in hippocampal neurons, AP-2 is responsible for the endocytosis of ADAM10. The AP-2 alpha subunit binds polyphosphoinositide-containing lipids, positioning AP-2 on the membrane. The AP-2 alpha subunit acts via its C-terminal appendage domain as a scaffolding platform for endocytic accessory proteins. The AP-2 alpha and AP-2 sigma subunits are thought to contribute to the recognition of the [ED]-X-X-X-L-[LI] motif. The chain is AP-2 complex subunit alpha-2 from Rattus norvegicus (Rat).